The following is a 171-amino-acid chain: MSCISRSRALFQIRSLASSSHLPLPKLRPSPAIYKSANKTAFNASPSTSQSATTTRGFRSTAAKMTVHNLTNAQDFKDALKSHKFVLVDFFATWCGPCRAIAPKIAEWSDAFPNIHYVKVDVDEVPDVAQEYNVRAMPTFLLFKDGEKVDEVVGANPPKLQALISANHPSS.

The Thioredoxin domain occupies 41–169 (AFNASPSTSQ…LQALISANHP (129 aa)). Cys95 and Cys98 are joined by a disulfide.

It belongs to the thioredoxin family.

The protein resides in the cytoplasm. It is found in the vacuole. Functionally, thioredoxin involved in responses to oxidative and cell wall stresses. Plays an important role in appressorium formation on hyphal tips. TRX2 may affect invasive growth via the MST11-MST7-PMK1 pathway since it is required for the proper folding or dimerization of MAPKK MST7. This chain is Thioredoxin-2, found in Pyricularia oryzae (strain 70-15 / ATCC MYA-4617 / FGSC 8958) (Rice blast fungus).